Consider the following 623-residue polypeptide: NAD-dependent malic enzyme 1, mitochondrial (623 aa).

Residues 1–38 constitute a mitochondrion transit peptide; sequence MGIANKLRLSSSSLSRILHRRILYSSAVRSFTTSEGHR. The active-site Proton donor is tyrosine 143. NAD(+) is bound at residue arginine 196. Lysine 214 (proton acceptor) is an active-site residue. A divalent metal cation-binding residues include glutamate 285, aspartate 286, and aspartate 309. 2 residues coordinate NAD(+): aspartate 309 and asparagine 464.

This sequence belongs to the malic enzymes family. Homodimer. Heterodimer of two related subunits in NAD-MEH complex. Interacts with NAD-ME2. Mg(2+) is required as a cofactor. Mn(2+) serves as cofactor. Expressed in leaves, stems, flowers, and roots (at protein level).

Its subcellular location is the mitochondrion. The catalysed reaction is (S)-malate + NAD(+) = pyruvate + CO2 + NADH. With respect to regulation, activated by oxaloacetate (OAA), 2-ketoglutarate, succinate and fumarate as homodimer and by OAA, 2-ketoglutarate, succinate, fumarate and coenzyme A (acetyl-CoA and CoA) as heterodimer NAD-MEH. Functionally, involved in the regulation of sugars and amino acids metabolisms during the night period. The sequence is that of NAD-dependent malic enzyme 1, mitochondrial (NAD-ME1) from Arabidopsis thaliana (Mouse-ear cress).